The chain runs to 381 residues: MSSSISPLLTTAISVAILLFSTISTAATIPNIHRPFNKIYAFGDSFTDTGNSRSGEGPAGFGHLSSPPYGMTFFRRPTNRYSDGRLTIDFVAESMNLPFLPPYLSLKTTNANGTATDTHGVNFAVSGSTVIKHAFFVKNNLSLDMTPQSIETELAWFEKYLETLGTNQKVSLFKDSLFWIGEIGVNDYAYTLGSTVSSDTIRELSISTFTRFLETLLNKGVKYMLVQGHPATGCLTLAMSLAAEDDRDSLGCVQSANNQSYTHNLALQSKLKQLRIKYPSATIVYADYWNAYRAVIKHPSKYGITEKFKACCGIGEPYNFQVFQTCGTDAATVCKDPNQYINWDGVHLTEAMYKVMADMFLDGTFTRPRFSDLLIKKLNYL.

An N-terminal signal peptide occupies residues 1–26 (MSSSISPLLTTAISVAILLFSTISTA). Ser-45 (nucleophile) is an active-site residue. N-linked (GlcNAc...) asparagine glycans are attached at residues Asn-112, Asn-140, and Asn-258. Catalysis depends on residues Asp-344 and His-347.

This sequence belongs to the 'GDSL' lipolytic enzyme family.

The protein resides in the secreted. The polypeptide is GDSL esterase/lipase At3g48460 (Arabidopsis thaliana (Mouse-ear cress)).